Consider the following 379-residue polypeptide: Cysteine-rich receptor-like protein kinase 44 (379 aa).

Residues 56–336 (FSPYNHLGEG…VRMLNANSFT (281 aa)) form the Protein kinase domain. ATP contacts are provided by residues 62–70 (LGEGGFGAV) and Lys84. A Phosphotyrosine modification is found at Tyr129. Asp181 functions as the Proton acceptor in the catalytic mechanism. At Ser185 the chain carries Phosphoserine. At Thr223 the chain carries Phosphothreonine. Tyr231 is modified (phosphotyrosine).

The protein belongs to the protein kinase superfamily. Ser/Thr protein kinase family. CRK subfamily.

The catalysed reaction is L-seryl-[protein] + ATP = O-phospho-L-seryl-[protein] + ADP + H(+). It carries out the reaction L-threonyl-[protein] + ATP = O-phospho-L-threonyl-[protein] + ADP + H(+). This is Cysteine-rich receptor-like protein kinase 44 from Arabidopsis thaliana (Mouse-ear cress).